Here is a 162-residue protein sequence, read N- to C-terminus: Large ribosomal subunit protein bL9 (162 aa).

Belongs to the bacterial ribosomal protein bL9 family.

Functionally, binds to the 23S rRNA. In Chlorobaculum parvum (strain DSM 263 / NCIMB 8327) (Chlorobium vibrioforme subsp. thiosulfatophilum), this protein is Large ribosomal subunit protein bL9.